We begin with the raw amino-acid sequence, 329 residues long: MAQSTLYSRVLGTGSYLPPDRVTNQELADRLAKDGIETSDEWIVARTGIRARHFAAPDVTTSDLALVAAQRAIEAADVDPQSIDLIIVATSTPDFVFPSTACLLQNKLGIKNGGAAFDVQAVCSGFAYALATADSFIRTGQHRTALVIGAETFSRILDFKDRTTCVLFGDGAGAVVLSASEEPGILGSALHADGSYSNILCTPGNVNRGVIAGSAFLHMDGQAVFKLAVNVLEKVAVEALSKAELASEQVDWLIPHQANIRIMTSTCRKLGLPQERMIVTVDEHGNTSAASIPLALDVAVRDGRIKRGQHVLIEGVGGGFTWGASVFRF.

Active-site residues include Cys-123 and His-256. The interval 257-261 is ACP-binding; the sequence is QANIR. The active site involves Asn-286.

It belongs to the thiolase-like superfamily. FabH family. Homodimer.

It is found in the cytoplasm. The enzyme catalyses malonyl-[ACP] + acetyl-CoA + H(+) = 3-oxobutanoyl-[ACP] + CO2 + CoA. It functions in the pathway lipid metabolism; fatty acid biosynthesis. Catalyzes the condensation reaction of fatty acid synthesis by the addition to an acyl acceptor of two carbons from malonyl-ACP. Catalyzes the first condensation reaction which initiates fatty acid synthesis and may therefore play a role in governing the total rate of fatty acid production. Possesses both acetoacetyl-ACP synthase and acetyl transacylase activities. Its substrate specificity determines the biosynthesis of branched-chain and/or straight-chain of fatty acids. The chain is Beta-ketoacyl-[acyl-carrier-protein] synthase III from Burkholderia pseudomallei (strain 1710b).